Here is a 122-residue protein sequence, read N- to C-terminus: Methylglyoxal synthase (122 aa).

An MGS-like domain is found at 1–122 (MRIALIAHDK…DLFIKHLKGK (122 aa)). Residues histidine 8, lysine 12, 34–37 (TGTT), and 54–55 (SG) each bind substrate. The active-site Proton donor/acceptor is the aspartate 60. Histidine 87 serves as a coordination point for substrate.

This sequence belongs to the methylglyoxal synthase family.

It carries out the reaction dihydroxyacetone phosphate = methylglyoxal + phosphate. Catalyzes the formation of methylglyoxal from dihydroxyacetone phosphate. This Acholeplasma laidlawii (strain PG-8A) protein is Methylglyoxal synthase.